A 347-amino-acid polypeptide reads, in one-letter code: NADH-ubiquinone oxidoreductase chain 2 (347 aa).

Helical transmembrane passes span 1-21, 25-45, 59-79, 96-116, 122-142, 148-168, 200-220, 240-260, 274-294, and 325-345; these read MNPLIFSIITFTMMLGTGIVM, HWLTMWIGFEMNMLAIIPILM, YFLTQATASMLLMLAVTINLV, IILTLAMAMKLGLSPFHFWVP, VHLPSGLILLTWQKLAPMSVL, MINLDLMFTMSILSIAIGGWG, MALLNLTIYIILTTTTFLTFM, ITTIILVTMLSLGGLPPLSGF, NSIIAPTTMAITALLNLFFYM, and LLSPLTILSTMILPLSPMLML.

This sequence belongs to the complex I subunit 2 family. As to quaternary structure, core subunit of respiratory chain NADH dehydrogenase (Complex I) which is composed of 45 different subunits. Interacts with TMEM242.

The protein localises to the mitochondrion inner membrane. It carries out the reaction a ubiquinone + NADH + 5 H(+)(in) = a ubiquinol + NAD(+) + 4 H(+)(out). Core subunit of the mitochondrial membrane respiratory chain NADH dehydrogenase (Complex I) which catalyzes electron transfer from NADH through the respiratory chain, using ubiquinone as an electron acceptor. Essential for the catalytic activity and assembly of complex I. This Thoopterus nigrescens (Swift fruit bat) protein is NADH-ubiquinone oxidoreductase chain 2.